The primary structure comprises 119 residues: Protein yippee-like 2 (119 aa).

The Yippee domain maps to 19–116 (RTYSCIHCRA…IELAHMIKDN (98 aa)). Residues Cys23, Cys26, Cys79, and Cys82 each contribute to the Zn(2+) site.

Belongs to the yippee family. In terms of assembly, may interact with FAM168B.

The protein localises to the nucleus. It is found in the nucleolus. This Chlorocebus aethiops (Green monkey) protein is Protein yippee-like 2 (YPEL2).